Reading from the N-terminus, the 222-residue chain is Germin-like protein subfamily 1 member 16 (222 aa).

A signal peptide spans methionine 1–alanine 22. Residues cysteine 32 and cysteine 48 are joined by a disulfide bond. The Cupin type-1 domain occupies serine 62–lysine 213. N-linked (GlcNAc...) asparagine glycosylation occurs at asparagine 77. Positions 110, 112, 117, and 159 each coordinate Mn(2+).

It belongs to the germin family. Oligomer (believed to be a pentamer but probably hexamer).

Its subcellular location is the secreted. The protein localises to the extracellular space. It is found in the apoplast. May play a role in plant defense. Probably has no oxalate oxidase activity even if the active site is conserved. The sequence is that of Germin-like protein subfamily 1 member 16 from Arabidopsis thaliana (Mouse-ear cress).